The primary structure comprises 430 residues: Adenylosuccinate synthetase (430 aa).

Residues 11–17 (GDEGKGK) and 39–41 (GHS) each bind GTP. Residue Asp-12 is the Proton acceptor of the active site. Mg(2+) contacts are provided by Asp-12 and Gly-39. IMP contacts are provided by residues 12–15 (DEGK), 37–40 (NAGH), Thr-129, Arg-143, Asn-221, Thr-236, and Arg-300. Catalysis depends on His-40, which acts as the Proton donor. 296 to 302 (VSTGRKR) contacts substrate. Residues Arg-302, 328 to 330 (KLD), and 412 to 414 (GTG) contribute to the GTP site.

This sequence belongs to the adenylosuccinate synthetase family. In terms of assembly, homodimer. Mg(2+) is required as a cofactor.

Its subcellular location is the cytoplasm. It catalyses the reaction IMP + L-aspartate + GTP = N(6)-(1,2-dicarboxyethyl)-AMP + GDP + phosphate + 2 H(+). The protein operates within purine metabolism; AMP biosynthesis via de novo pathway; AMP from IMP: step 1/2. Plays an important role in the de novo pathway and in the salvage pathway of purine nucleotide biosynthesis. Catalyzes the first committed step in the biosynthesis of AMP from IMP. The chain is Adenylosuccinate synthetase from Sordaria macrospora (strain ATCC MYA-333 / DSM 997 / K(L3346) / K-hell).